Here is a 708-residue protein sequence, read N- to C-terminus: Ion-translocating oxidoreductase complex subunit C (708 aa).

2 consecutive 4Fe-4S ferredoxin-type domains span residues 369-397 (GEPQ…QQLY) and 407-436 (KATT…VQYF). Residues C377, C380, C383, C387, C416, C419, C422, and C426 each coordinate [4Fe-4S] cluster. The interval 630–682 (AKARKLEQQQANAEPEEQIDPRKAAVEAAIARAKARKLEQQQANAEPEEQIDP) is disordered.

Belongs to the 4Fe4S bacterial-type ferredoxin family. RnfC subfamily. In terms of assembly, the complex is composed of six subunits: RsxA, RsxB, RsxC, RsxD, RsxE and RsxG. [4Fe-4S] cluster serves as cofactor.

Its subcellular location is the cell inner membrane. Functionally, part of a membrane-bound complex that couples electron transfer with translocation of ions across the membrane. Required to maintain the reduced state of SoxR. This Escherichia coli O1:K1 / APEC protein is Ion-translocating oxidoreductase complex subunit C.